The primary structure comprises 443 residues: Trigger factor (443 aa).

One can recognise a PPIase FKBP-type domain in the interval Gly-163 to Pro-248.

Belongs to the FKBP-type PPIase family. Tig subfamily.

It localises to the cytoplasm. It catalyses the reaction [protein]-peptidylproline (omega=180) = [protein]-peptidylproline (omega=0). Functionally, involved in protein export. Acts as a chaperone by maintaining the newly synthesized protein in an open conformation. Functions as a peptidyl-prolyl cis-trans isomerase. The chain is Trigger factor from Agathobacter rectalis (strain ATCC 33656 / DSM 3377 / JCM 17463 / KCTC 5835 / VPI 0990) (Eubacterium rectale).